The primary structure comprises 353 residues: MDIAALLSGGVDSSVVVHLLCEQGYKPTLFYIKIGMDGAEYMDCSAEEDIELSTAIARRYGLALEVVDLHREYWDNVAAYAIEKIRKGQTPNPDVMCNKLIKFGCFEQQVGKDFDLTATGHYATTLQLGGKTWLGTAKDPIKDQTDFLAQIDYLQVSKLLFPIGGLMKHEVREIALQAGLPSARRKDSQGICFLGKINYNDFVRRFLGEKEGAVIEFETGKKIGTHRGYWFHTIGQRKGLGLGGGPWFVVKKDIQDNIIYVSHGYDAEQQYGYEFRMKDFNFITDNPWEGSTGEEEVTFKIRHTPEFIKGRLLHDEEGYRIISSEKLQGIAPGQFGVIYDAESRVCFGSGEIG.

Position 6-13 (6-13 (LLSGGVDS)) interacts with ATP. An interaction with target base in tRNA region spans residues 92 to 94 (NPD). Catalysis depends on Cys97, which acts as the Nucleophile. A disulfide bridge links Cys97 with Cys192. ATP is bound at residue Gly120. Residues 142 to 144 (KDQ) form an interaction with tRNA region. Cys192 (cysteine persulfide intermediate) is an active-site residue.

The protein belongs to the MnmA/TRMU family.

It is found in the cytoplasm. It catalyses the reaction S-sulfanyl-L-cysteinyl-[protein] + uridine(34) in tRNA + AH2 + ATP = 2-thiouridine(34) in tRNA + L-cysteinyl-[protein] + A + AMP + diphosphate + H(+). Its function is as follows. Catalyzes the 2-thiolation of uridine at the wobble position (U34) of tRNA, leading to the formation of s(2)U34. This Bacteroides fragilis (strain ATCC 25285 / DSM 2151 / CCUG 4856 / JCM 11019 / LMG 10263 / NCTC 9343 / Onslow / VPI 2553 / EN-2) protein is tRNA-specific 2-thiouridylase MnmA 2.